The primary structure comprises 202 residues: ATP-dependent Clp protease proteolytic subunit (202 aa).

Residue Ser-106 is the Nucleophile of the active site. Residue His-131 is part of the active site.

The protein belongs to the peptidase S14 family. Fourteen ClpP subunits assemble into 2 heptameric rings which stack back to back to give a disk-like structure with a central cavity, resembling the structure of eukaryotic proteasomes.

The protein resides in the cytoplasm. The catalysed reaction is Hydrolysis of proteins to small peptides in the presence of ATP and magnesium. alpha-casein is the usual test substrate. In the absence of ATP, only oligopeptides shorter than five residues are hydrolyzed (such as succinyl-Leu-Tyr-|-NHMec, and Leu-Tyr-Leu-|-Tyr-Trp, in which cleavage of the -Tyr-|-Leu- and -Tyr-|-Trp bonds also occurs).. In terms of biological role, cleaves peptides in various proteins in a process that requires ATP hydrolysis. Has a chymotrypsin-like activity. Plays a major role in the degradation of misfolded proteins. In Shewanella oneidensis (strain ATCC 700550 / JCM 31522 / CIP 106686 / LMG 19005 / NCIMB 14063 / MR-1), this protein is ATP-dependent Clp protease proteolytic subunit.